We begin with the raw amino-acid sequence, 192 residues long: Dihydrofolate reductase (192 aa).

The DHFR domain occupies 5–191; it reads NVAIIVAALK…FTYNYTLWTR (187 aa). Residues alanine 11 and 18 to 24 contribute to the NADP(+) site; that span reads GIGYKGK. 32–37 is a binding site for substrate; sequence EIRYFK. 56–58 is an NADP(+) binding site; it reads RKT. Arginine 72 provides a ligand contact to substrate. Position 78 to 80 (78 to 80) interacts with NADP(+); sequence SRS. The substrate site is built by isoleucine 112 and tyrosine 118. 113–120 serves as a coordination point for NADP(+); that stretch reads GGAEIYNE.

The protein belongs to the dihydrofolate reductase family.

It catalyses the reaction (6S)-5,6,7,8-tetrahydrofolate + NADP(+) = 7,8-dihydrofolate + NADPH + H(+). It functions in the pathway cofactor biosynthesis; tetrahydrofolate biosynthesis; 5,6,7,8-tetrahydrofolate from 7,8-dihydrofolate: step 1/1. Functionally, key enzyme in folate metabolism. Catalyzes an essential reaction for de novo glycine and purine synthesis, and for DNA precursor synthesis. In Candida albicans (Yeast), this protein is Dihydrofolate reductase (DFR1).